The chain runs to 349 residues: Fructose-bisphosphate aldolase 2, chloroplastic (349 aa).

Arginine 47 and lysine 137 together coordinate substrate. The Proton acceptor role is filled by glutamate 177. Lysine 219 (schiff-base intermediate with dihydroxyacetone-P) is an active-site residue.

The protein belongs to the class I fructose-bisphosphate aldolase family.

Its subcellular location is the plastid. The protein localises to the chloroplast. It catalyses the reaction beta-D-fructose 1,6-bisphosphate = D-glyceraldehyde 3-phosphate + dihydroxyacetone phosphate. It participates in carbohydrate degradation; glycolysis; D-glyceraldehyde 3-phosphate and glycerone phosphate from D-glucose: step 4/4. In Pisum sativum (Garden pea), this protein is Fructose-bisphosphate aldolase 2, chloroplastic.